Reading from the N-terminus, the 310-residue chain is MVEAGVKTALAARVESLGGCEVKAGEPLAPLTSVRAGGAAEALVRPRSPDALVALLKLAREEGVPVSILGGGANTLVGDGGVPGLTLKLPGDLFPEVADVGPEEGRLTLGAGAAIVRLINVMRAHALVGAEFLAGIPGTLGGAVSMNAGTKNGEAFRVIEAVEVATADGVGWLTKAQVPYSYRHSELPPGGVVTRVRFALRKGDVVASKAVMDADLGYRKRTQPLSQPNFGSVFTNPPGDHAGRLIELAGLKGYSLGRAQVSTLHANWIVNLGGATARDVLGLVTLMQQRVLEQSGVDMKPEVKRLGDFL.

Residues Arg35–Gly203 enclose the FAD-binding PCMH-type domain. The active site involves Arg183. Residue Ser232 is the Proton donor of the active site. Glu302 is an active-site residue.

The protein belongs to the MurB family. Requires FAD as cofactor.

Its subcellular location is the cytoplasm. It carries out the reaction UDP-N-acetyl-alpha-D-muramate + NADP(+) = UDP-N-acetyl-3-O-(1-carboxyvinyl)-alpha-D-glucosamine + NADPH + H(+). It functions in the pathway cell wall biogenesis; peptidoglycan biosynthesis. Cell wall formation. In Myxococcus xanthus (strain DK1622), this protein is UDP-N-acetylenolpyruvoylglucosamine reductase.